A 372-amino-acid chain; its full sequence is Queuine tRNA-ribosyltransferase (372 aa).

Aspartate 92 (proton acceptor) is an active-site residue. Substrate is bound by residues 92–96 (DSGGY), aspartate 146, glutamine 188, and glycine 215. An RNA binding region spans residues 246 to 252 (GIGSLKE). The active-site Nucleophile is the aspartate 265. The interval 270–274 (TRLGR) is RNA binding; important for wobble base 34 recognition. Zn(2+) is bound by residues cysteine 303, cysteine 305, cysteine 308, and histidine 334.

It belongs to the queuine tRNA-ribosyltransferase family. In terms of assembly, homodimer. Within each dimer, one monomer is responsible for RNA recognition and catalysis, while the other monomer binds to the replacement base PreQ1. Zn(2+) is required as a cofactor.

It catalyses the reaction 7-aminomethyl-7-carbaguanine + guanosine(34) in tRNA = 7-aminomethyl-7-carbaguanosine(34) in tRNA + guanine. It participates in tRNA modification; tRNA-queuosine biosynthesis. Catalyzes the base-exchange of a guanine (G) residue with the queuine precursor 7-aminomethyl-7-deazaguanine (PreQ1) at position 34 (anticodon wobble position) in tRNAs with GU(N) anticodons (tRNA-Asp, -Asn, -His and -Tyr). Catalysis occurs through a double-displacement mechanism. The nucleophile active site attacks the C1' of nucleotide 34 to detach the guanine base from the RNA, forming a covalent enzyme-RNA intermediate. The proton acceptor active site deprotonates the incoming PreQ1, allowing a nucleophilic attack on the C1' of the ribose to form the product. After dissociation, two additional enzymatic reactions on the tRNA convert PreQ1 to queuine (Q), resulting in the hypermodified nucleoside queuosine (7-(((4,5-cis-dihydroxy-2-cyclopenten-1-yl)amino)methyl)-7-deazaguanosine). This chain is Queuine tRNA-ribosyltransferase, found in Prochlorococcus marinus (strain MIT 9515).